The sequence spans 376 residues: Erythronate-4-phosphate dehydrogenase (376 aa).

S45 and T67 together coordinate substrate. NAD(+) is bound by residues 127 to 128 (QV), D147, and T176. R209 is an active-site residue. D233 serves as a coordination point for NAD(+). E238 is a catalytic residue. H255 acts as the Proton donor in catalysis. G258 contacts NAD(+). Y259 contacts substrate.

Belongs to the D-isomer specific 2-hydroxyacid dehydrogenase family. PdxB subfamily. As to quaternary structure, homodimer.

The protein localises to the cytoplasm. The enzyme catalyses 4-phospho-D-erythronate + NAD(+) = (R)-3-hydroxy-2-oxo-4-phosphooxybutanoate + NADH + H(+). The protein operates within cofactor biosynthesis; pyridoxine 5'-phosphate biosynthesis; pyridoxine 5'-phosphate from D-erythrose 4-phosphate: step 2/5. In terms of biological role, catalyzes the oxidation of erythronate-4-phosphate to 3-hydroxy-2-oxo-4-phosphonooxybutanoate. In Aliivibrio fischeri (strain ATCC 700601 / ES114) (Vibrio fischeri), this protein is Erythronate-4-phosphate dehydrogenase.